Consider the following 87-residue polypeptide: Small ribosomal subunit protein uS15 (87 aa).

The protein belongs to the universal ribosomal protein uS15 family. As to quaternary structure, part of the 30S ribosomal subunit. Forms a bridge to the 50S subunit in the 70S ribosome, contacting the 23S rRNA.

Its function is as follows. One of the primary rRNA binding proteins, it binds directly to 16S rRNA where it helps nucleate assembly of the platform of the 30S subunit by binding and bridging several RNA helices of the 16S rRNA. Forms an intersubunit bridge (bridge B4) with the 23S rRNA of the 50S subunit in the ribosome. The polypeptide is Small ribosomal subunit protein uS15 (Acetivibrio thermocellus (strain ATCC 27405 / DSM 1237 / JCM 9322 / NBRC 103400 / NCIMB 10682 / NRRL B-4536 / VPI 7372) (Clostridium thermocellum)).